Consider the following 424-residue polypeptide: Probable aminotransferase TAT4 (424 aa).

It belongs to the class-I pyridoxal-phosphate-dependent aminotransferase family. Requires pyridoxal 5'-phosphate as cofactor.

In Arabidopsis thaliana (Mouse-ear cress), this protein is Probable aminotransferase TAT4.